A 651-amino-acid chain; its full sequence is Mitogen-activated protein kinase kinase kinase 3 (651 aa).

Residues 68 to 330 form the Protein kinase domain; that stretch reads WRKGELIGCG…ATELLQHPFV (263 aa). Residues 74–82 and Lys-97 contribute to the ATP site; that span reads IGCGAFGRV. Residues 105-130 are a coiled coil; the sequence is SASKEKTQGHIRELEEEVQLLKNLSH. Residues Lys-108 and Lys-110 each participate in a glycyl lysine isopeptide (Lys-Gly) (interchain with G-Cter in ubiquitin) cross-link. Residue Asp-196 is the Proton acceptor of the active site. Positions 573-608 are disordered; that stretch reads MPSPLKSSKRTLNTSRVMQSGTEPTQVNESTKKGVN. Polar residues predominate over residues 582–608; the sequence is RTLNTSRVMQSGTEPTQVNESTKKGVN. Residues 618-641 are a coiled coil; the sequence is RKWEEELYEELERHRENLRHAGAG.

The protein belongs to the protein kinase superfamily. STE Ser/Thr protein kinase family. MAP kinase kinase kinase subfamily. Interacts with NACK2 and MKK6. In terms of tissue distribution, expressed in roots and flowers.

It is found in the cytoplasm. It localises to the cytoskeleton. It carries out the reaction L-seryl-[protein] + ATP = O-phospho-L-seryl-[protein] + ADP + H(+). The enzyme catalyses L-threonyl-[protein] + ATP = O-phospho-L-threonyl-[protein] + ADP + H(+). Its function is as follows. Involved in cortical microtubules organization and stabilization by regulating the phosphorylation state of microtubule-associated proteins such as MAP65-1. This Arabidopsis thaliana (Mouse-ear cress) protein is Mitogen-activated protein kinase kinase kinase 3 (ANP3).